The following is a 310-amino-acid chain: Probable manganese-dependent inorganic pyrophosphatase (310 aa).

His-9, Asp-13, Asp-15, Asp-76, His-98, and Asp-150 together coordinate Mn(2+).

This sequence belongs to the PPase class C family. Mn(2+) serves as cofactor.

The protein localises to the cytoplasm. It carries out the reaction diphosphate + H2O = 2 phosphate + H(+). This Streptococcus thermophilus (strain ATCC BAA-491 / LMD-9) protein is Probable manganese-dependent inorganic pyrophosphatase.